Here is a 191-residue protein sequence, read N- to C-terminus: Nascent polypeptide-associated complex subunit alpha (191 aa).

Positions 24 to 89 (SRPERKARKA…AKVEDPNSAA (66 aa)) constitute an NAC-A/B domain. The tract at residues 126 to 149 (QDAPSADSSAPAPSGEATDASASG) is disordered. The segment covering 127–139 (DAPSADSSAPAPS) has biased composition (low complexity). Positions 153-191 (VSDEEIQLIVAQTGVDEAKAREAYISEKGDLINAIMKLQ) constitute a UBA domain.

This sequence belongs to the NAC-alpha family. In terms of assembly, part of the nascent polypeptide-associated complex (NAC), consisting of EGD2 and EGD1. NAC associates with ribosomes via EGD1.

It is found in the cytoplasm. It localises to the nucleus. In terms of biological role, component of the nascent polypeptide-associated complex (NAC), a dynamic component of the ribosomal exit tunnel, protecting the emerging polypeptides from interaction with other cytoplasmic proteins to ensure appropriate nascent protein targeting. The NAC complex also promotes mitochondrial protein import by enhancing productive ribosome interactions with the outer mitochondrial membrane and blocks the inappropriate interaction of ribosomes translating non-secretory nascent polypeptides with translocation sites in the membrane of the endoplasmic reticulum. EGD2 may also be involved in transcription regulation. This chain is Nascent polypeptide-associated complex subunit alpha (EGD2), found in Cryptococcus neoformans var. neoformans serotype D (strain B-3501A) (Filobasidiella neoformans).